Consider the following 124-residue polypeptide: Holo-[acyl-carrier-protein] synthase (124 aa).

Asp-5 and Glu-51 together coordinate Mg(2+).

This sequence belongs to the P-Pant transferase superfamily. AcpS family. It depends on Mg(2+) as a cofactor.

It localises to the cytoplasm. It catalyses the reaction apo-[ACP] + CoA = holo-[ACP] + adenosine 3',5'-bisphosphate + H(+). Transfers the 4'-phosphopantetheine moiety from coenzyme A to a Ser of acyl-carrier-protein. The protein is Holo-[acyl-carrier-protein] synthase of Hydrogenobaculum sp. (strain Y04AAS1).